The chain runs to 447 residues: Tubulin beta-5 chain (447 aa).

Positions 11, 69, 138, 142, 143, 144, 204, and 226 each coordinate GTP. Residue Glu69 participates in Mg(2+) binding.

It belongs to the tubulin family. In terms of assembly, dimer of alpha and beta chains. A typical microtubule is a hollow water-filled tube with an outer diameter of 25 nm and an inner diameter of 15 nM. Alpha-beta heterodimers associate head-to-tail to form protofilaments running lengthwise along the microtubule wall with the beta-tubulin subunit facing the microtubule plus end conferring a structural polarity. Microtubules usually have 13 protofilaments but different protofilament numbers can be found in some organisms and specialized cells. The cofactor is Mg(2+).

It is found in the cytoplasm. It localises to the cytoskeleton. Tubulin is the major constituent of microtubules, a cylinder consisting of laterally associated linear protofilaments composed of alpha- and beta-tubulin heterodimers. Microtubules grow by the addition of GTP-tubulin dimers to the microtubule end, where a stabilizing cap forms. Below the cap, tubulin dimers are in GDP-bound state, owing to GTPase activity of alpha-tubulin. This is Tubulin beta-5 chain (TUBB5) from Triticum aestivum (Wheat).